The following is a 418-amino-acid chain: Tyrosine--tRNA ligase (418 aa).

Tyr-34 lines the L-tyrosine pocket. The 'HIGH' region signature appears at 39–48; the sequence is PTADSLHLGH. L-tyrosine-binding residues include Tyr-169 and Gln-173. The 'KMSKS' region signature appears at 229-233; it reads KFGKS. Lys-232 serves as a coordination point for ATP. The region spanning 352–418 is the S4 RNA-binding domain; it reads LNLVDMLVTA…GKKKYAVLTY (67 aa).

This sequence belongs to the class-I aminoacyl-tRNA synthetase family. TyrS type 1 subfamily. As to quaternary structure, homodimer.

It localises to the cytoplasm. It carries out the reaction tRNA(Tyr) + L-tyrosine + ATP = L-tyrosyl-tRNA(Tyr) + AMP + diphosphate + H(+). Its function is as follows. Catalyzes the attachment of tyrosine to tRNA(Tyr) in a two-step reaction: tyrosine is first activated by ATP to form Tyr-AMP and then transferred to the acceptor end of tRNA(Tyr). This chain is Tyrosine--tRNA ligase, found in Streptococcus pyogenes serotype M6 (strain ATCC BAA-946 / MGAS10394).